A 764-amino-acid chain; its full sequence is Subtilisin-like protease SBT1.6 (764 aa).

The signal sequence occupies residues 1–20 (MASSTIVLLLFLSFPFISFA). Positions 46–99 (HWYSTEFAEESRIVHVYHTVFHGFSAVVTPDEADNLRNHPAVLAVFEDRRRELH) constitute an Inhibitor I9 domain. Residues 103 to 606 (SPQFLGLQNQ…SGHLNLGRAM (504 aa)) enclose the Peptidase S8 domain. The active-site Charge relay system is the D131. An N-linked (GlcNAc...) asparagine glycan is attached at N191. The active-site Charge relay system is H205. The PA domain maps to 377-457 (SSASLCMENT…NEGDRIKAYA (81 aa)). S538 serves as the catalytic Charge relay system. N-linked (GlcNAc...) asparagine glycosylation occurs at N578.

It belongs to the peptidase S8 family. In terms of tissue distribution, expressed in roots, leaves and flowers of mature plants.

The protein is Subtilisin-like protease SBT1.6 of Arabidopsis thaliana (Mouse-ear cress).